A 305-amino-acid chain; its full sequence is Acetyl-coenzyme A carboxylase carboxyl transferase subunit beta (305 aa).

Residues 29–298 (LWTKCESCDA…EMKLPLLESS (270 aa)) enclose the CoA carboxyltransferase N-terminal domain. 4 residues coordinate Zn(2+): cysteine 33, cysteine 36, cysteine 52, and cysteine 55. A C4-type zinc finger spans residues 33-55 (CESCDALTYTKDLQANLMVCLQC).

The protein belongs to the AccD/PCCB family. In terms of assembly, acetyl-CoA carboxylase is a heterohexamer composed of biotin carboxyl carrier protein (AccB), biotin carboxylase (AccC) and two subunits each of ACCase subunit alpha (AccA) and ACCase subunit beta (AccD). Zn(2+) is required as a cofactor.

It localises to the cytoplasm. The enzyme catalyses N(6)-carboxybiotinyl-L-lysyl-[protein] + acetyl-CoA = N(6)-biotinyl-L-lysyl-[protein] + malonyl-CoA. Its pathway is lipid metabolism; malonyl-CoA biosynthesis; malonyl-CoA from acetyl-CoA: step 1/1. Its function is as follows. Component of the acetyl coenzyme A carboxylase (ACC) complex. Biotin carboxylase (BC) catalyzes the carboxylation of biotin on its carrier protein (BCCP) and then the CO(2) group is transferred by the transcarboxylase to acetyl-CoA to form malonyl-CoA. This is Acetyl-coenzyme A carboxylase carboxyl transferase subunit beta from Synechococcus sp. (strain ATCC 27144 / PCC 6301 / SAUG 1402/1) (Anacystis nidulans).